The primary structure comprises 315 residues: Olfactory receptor 11A1 (315 aa).

Over 1–27 (MEIVSTGNETITEFVLLGFYDIPELHF) the chain is Extracellular. An N-linked (GlcNAc...) asparagine glycan is attached at asparagine 8. The helical transmembrane segment at 28–48 (LFFIVFTAVYVFIIIGNMLII) threads the bilayer. Topologically, residues 49-56 (VAVVSSQR) are cytoplasmic. A helical membrane pass occupies residues 57 to 77 (LHKPMYIFLANLSFLDILYTS). At 78 to 100 (AVMPKMLEGFLQEATISVAGCLL) the chain is on the extracellular side. Residues cysteine 98 and cysteine 190 are joined by a disulfide bond. The chain crosses the membrane as a helical span at residues 101–121 (QFFIFGSLATAECLLLAVMAY). Topologically, residues 122 to 140 (DRYLAICYPLHYPLLMGPR) are cytoplasmic. Residues 141–161 (RYMGLVVTTWLSGFVVDGLVV) form a helical membrane-spanning segment. Residues 162-198 (ALVAQLRFCGPNHIDQFYCDFMLFVGLACSDPRVAQV) lie on the Extracellular side of the membrane. Residues 199–218 (TTLILSVFCLTIPFGLILTS) form a helical membrane-spanning segment. Residues 219-238 (YARIVVAVLRVPAGASRRRA) lie on the Cytoplasmic side of the membrane. A helical transmembrane segment spans residues 239–259 (FSTCSSHLAVVTTFYGTLMIF). Residues 260 to 272 (YVAPSAVHSQLLS) lie on the Extracellular side of the membrane. Residues 273-293 (KVFSLLYTVVTPLFNPVIYTM) form a helical membrane-spanning segment. Topologically, residues 294 to 315 (RNKEVHQALRKILCIKQTETLD) are cytoplasmic.

This sequence belongs to the G-protein coupled receptor 1 family.

Its subcellular location is the cell membrane. In terms of biological role, odorant receptor. The protein is Olfactory receptor 11A1 (OR11A1) of Homo sapiens (Human).